A 133-amino-acid chain; its full sequence is MIQKFTNLYVTDNSGAIAVRVFQTYPGNRKIVPVGSIVRHSVKKIHRILPWGKQLRGRRKRIICRSQCGRSWIVQTSYQIPYIDGATLRFSKNRVLLVKRKRGIRIYRGRRIYGLTTRAVNNERTINLFRICI.

This sequence belongs to the universal ribosomal protein uL14 family. In terms of assembly, probably part of the large ribosomal subunit.

It is found in the hydrogenosome. This Nyctotherus ovalis protein is Large ribosomal subunit protein uL14m (rpl14).